We begin with the raw amino-acid sequence, 203 residues long: Dephospho-CoA kinase (203 aa).

The region spanning 6–203 is the DPCK domain; the sequence is RLGITGGIAC…SLLGRGGKGG (198 aa). Residue 14–19 coordinates ATP; that stretch reads ACGKSV.

The protein belongs to the CoaE family.

It localises to the cytoplasm. The enzyme catalyses 3'-dephospho-CoA + ATP = ADP + CoA + H(+). It functions in the pathway cofactor biosynthesis; coenzyme A biosynthesis; CoA from (R)-pantothenate: step 5/5. Functionally, catalyzes the phosphorylation of the 3'-hydroxyl group of dephosphocoenzyme A to form coenzyme A. In Thermosynechococcus vestitus (strain NIES-2133 / IAM M-273 / BP-1), this protein is Dephospho-CoA kinase.